The primary structure comprises 288 residues: Nucleotide-binding protein APP7_0339 (288 aa).

8 to 15 (GRSGSGKS) provides a ligand contact to ATP. 56-59 (DIRN) serves as a coordination point for GTP.

Belongs to the RapZ-like family.

Its function is as follows. Displays ATPase and GTPase activities. In Actinobacillus pleuropneumoniae serotype 7 (strain AP76), this protein is Nucleotide-binding protein APP7_0339.